The primary structure comprises 80 residues: Large ribosomal subunit protein uL24 (80 aa).

This sequence belongs to the universal ribosomal protein uL24 family. In terms of assembly, part of the 50S ribosomal subunit.

In terms of biological role, one of two assembly initiator proteins, it binds directly to the 5'-end of the 23S rRNA, where it nucleates assembly of the 50S subunit. Functionally, one of the proteins that surrounds the polypeptide exit tunnel on the outside of the subunit. The sequence is that of Large ribosomal subunit protein uL24 from Chlorobaculum tepidum (strain ATCC 49652 / DSM 12025 / NBRC 103806 / TLS) (Chlorobium tepidum).